The chain runs to 178 residues: Crossover junction endodeoxyribonuclease RuvC (178 aa).

Residues Asp18, Glu78, and Asp150 contribute to the active site. Residues Asp18, Glu78, and Asp150 each contribute to the Mg(2+) site.

The protein belongs to the RuvC family. Homodimer which binds Holliday junction (HJ) DNA. The HJ becomes 2-fold symmetrical on binding to RuvC with unstacked arms; it has a different conformation from HJ DNA in complex with RuvA. In the full resolvosome a probable DNA-RuvA(4)-RuvB(12)-RuvC(2) complex forms which resolves the HJ. Mg(2+) serves as cofactor.

The protein localises to the cytoplasm. It carries out the reaction Endonucleolytic cleavage at a junction such as a reciprocal single-stranded crossover between two homologous DNA duplexes (Holliday junction).. The RuvA-RuvB-RuvC complex processes Holliday junction (HJ) DNA during genetic recombination and DNA repair. Endonuclease that resolves HJ intermediates. Cleaves cruciform DNA by making single-stranded nicks across the HJ at symmetrical positions within the homologous arms, yielding a 5'-phosphate and a 3'-hydroxyl group; requires a central core of homology in the junction. The consensus cleavage sequence is 5'-(A/T)TT(C/G)-3'. Cleavage occurs on the 3'-side of the TT dinucleotide at the point of strand exchange. HJ branch migration catalyzed by RuvA-RuvB allows RuvC to scan DNA until it finds its consensus sequence, where it cleaves and resolves the cruciform DNA. In Granulibacter bethesdensis (strain ATCC BAA-1260 / CGDNIH1), this protein is Crossover junction endodeoxyribonuclease RuvC.